The chain runs to 150 residues: SsrA-binding protein (150 aa).

It belongs to the SmpB family.

Its subcellular location is the cytoplasm. In terms of biological role, required for rescue of stalled ribosomes mediated by trans-translation. Binds to transfer-messenger RNA (tmRNA), required for stable association of tmRNA with ribosomes. tmRNA and SmpB together mimic tRNA shape, replacing the anticodon stem-loop with SmpB. tmRNA is encoded by the ssrA gene; the 2 termini fold to resemble tRNA(Ala) and it encodes a 'tag peptide', a short internal open reading frame. During trans-translation Ala-aminoacylated tmRNA acts like a tRNA, entering the A-site of stalled ribosomes, displacing the stalled mRNA. The ribosome then switches to translate the ORF on the tmRNA; the nascent peptide is terminated with the 'tag peptide' encoded by the tmRNA and targeted for degradation. The ribosome is freed to recommence translation, which seems to be the essential function of trans-translation. The sequence is that of SsrA-binding protein from Coprothermobacter proteolyticus (strain ATCC 35245 / DSM 5265 / OCM 4 / BT).